The primary structure comprises 138 residues: Aspartate 1-decarboxylase (138 aa).

S25 functions as the Schiff-base intermediate with substrate; via pyruvic acid in the catalytic mechanism. At S25 the chain carries Pyruvic acid (Ser). T57 is a substrate binding site. The active-site Proton donor is Y58. 73 to 75 contacts substrate; it reads GAA.

It belongs to the PanD family. In terms of assembly, heterooctamer of four alpha and four beta subunits. Requires pyruvate as cofactor. Is synthesized initially as an inactive proenzyme, which is activated by self-cleavage at a specific serine bond to produce a beta-subunit with a hydroxyl group at its C-terminus and an alpha-subunit with a pyruvoyl group at its N-terminus.

It localises to the cytoplasm. It carries out the reaction L-aspartate + H(+) = beta-alanine + CO2. Its pathway is cofactor biosynthesis; (R)-pantothenate biosynthesis; beta-alanine from L-aspartate: step 1/1. Catalyzes the pyruvoyl-dependent decarboxylation of aspartate to produce beta-alanine. The polypeptide is Aspartate 1-decarboxylase (Renibacterium salmoninarum (strain ATCC 33209 / DSM 20767 / JCM 11484 / NBRC 15589 / NCIMB 2235)).